The primary structure comprises 572 residues: MFS-type transporter pydD (572 aa).

The segment covering 1 to 15 has biased composition (basic and acidic residues); sequence MLQEDKSSETMHDPS. The interval 1 to 46 is disordered; it reads MLQEDKSSETMHDPSTRGVETRNVTAVDSPLETATTSESPETERTN. A glycan (N-linked (GlcNAc...) asparagine) is linked at N23. Residues 29–39 are compositionally biased toward low complexity; it reads SPLETATTSES. 8 helical membrane-spanning segments follow: residues 56 to 76, 88 to 108, 123 to 143, 156 to 176, 185 to 205, 212 to 232, 255 to 275, and 282 to 302; these read FWALLVSISLAGLLTALEGTI, LGGGHLYVWVVNGYLFAMTAM, WPMLGATALFVLGSGICGGAT, GIGASGTTVLTETIICDVVPL, IVMGMIFLGTALGPFFAGLIV, WTFYLALPVGGAALVALFSFL, ALFVAAISSVLIGLSWAGSVY, and VLVPLFVGIAGMGLFMVFEGS. An N-linked (GlcNAc...) asparagine glycan is attached at N317. 6 helical membrane-spanning segments follow: residues 321 to 341, 358 to 378, 386 to 406, 419 to 439, 451 to 471, and 529 to 549; these read VGVMIMTFFHGIITIWQLYFM, VQILATILAILPAAGIGGFLM, PIHYASWAVTLIGLGLFSLLD, IVYSMGAGMLVPTLLPALLAP, TWSFVRSFGMVWGTAIPAAVF, and WLVSLAFAGMGLLAATLAREV.

The protein belongs to the major facilitator superfamily.

It is found in the membrane. MFS-type transporter; part of the gene cluster that mediates the biosynthesis of pyrrocidines, fungal natural products containing a macrocyclic para-cyclophane connected to a decahydrofluorene ring system that show potent antibiotic activities toward Gram-negative bacteria. The sequence is that of MFS-type transporter pydD from Acremonium sp.